The primary structure comprises 181 residues: Crustacyanin-A1 subunit (181 aa).

3 disulfides stabilise this stretch: C12–C121, C51–C173, and C117–C150.

Belongs to the calycin superfamily. Lipocalin family. Oligomer; Can form dimers (beta-crustacyanin); or complexes of 16 subunits (alpha-crustacyanin). There are five types of subunits: A1, A2, A3, C1 and C2. As to expression, found in the carapace.

It localises to the secreted. It is found in the extracellular space. Its function is as follows. Binds the carotenoid astaxanthin (AXT) which provides the blue coloration to the carapace of the lobster. The chain is Crustacyanin-A1 subunit from Homarus gammarus (European lobster).